The chain runs to 348 residues: Rhodopsin (348 aa).

Met-1 bears the N-acetylmethionine mark. The Extracellular segment spans residues 1–36; that stretch reads MNGTEGPNFYVPFSNKTGVVRSPFEFPQYYLAEPWQ. N-linked (GlcNAc...) asparagine glycosylation is found at Asn-2 and Asn-15. The chain crosses the membrane as a helical span at residues 37 to 61; that stretch reads FSMLAAYMFLLIVLGFPINFLTLYV. The Cytoplasmic portion of the chain corresponds to 62–73; it reads TVQHKKLRTPLN. The chain crosses the membrane as a helical span at residues 74-96; sequence YILLNLAVADLFMVFGGFTTTLY. Topologically, residues 97 to 110 are extracellular; the sequence is TSLHGYFVFGPTGC. A disulfide bond links Cys-110 and Cys-187. The chain crosses the membrane as a helical span at residues 111 to 133; sequence NLEGFFATLGGEIALWSLVVLAI. Positions 134–136 match the 'Ionic lock' involved in activated form stabilization motif; the sequence is ERY. Over 134-152 the chain is Cytoplasmic; the sequence is ERYVVVCKPMSNFRFGENH. Residues 153–173 form a helical membrane-spanning segment; sequence AIMGVGFTWVMALACAAPPLV. Topologically, residues 174 to 202 are extracellular; it reads GWSRYIPEGMQCSCGIDYYTLKPEVNNES. Glu-201 is a binding site for Zn(2+). A helical membrane pass occupies residues 203–224; it reads FVIYMFVVHFTIPMIVIFFCYG. At 225–252 the chain is on the cytoplasmic side; that stretch reads QLVFTVKEAAAQQQESATTQKAEKEVTR. Residues 253–274 traverse the membrane as a helical segment; it reads MVIIMVIAFLICWVPYASVAFY. Residues 275–286 are Extracellular-facing; sequence IFTHQGSNFGPI. A Zn(2+)-binding site is contributed by Gln-279. The chain crosses the membrane as a helical span at residues 287 to 308; the sequence is FMTLPAFFAKAASIYNPVIYIM. Lys-296 carries the post-translational modification N6-(retinylidene)lysine. The Cytoplasmic segment spans residues 309–348; sequence MNKQFRTCMITTLCCGKNPLGDDEVSASASKTETSQVAPA. Residues Cys-322 and Cys-323 are each lipidated (S-palmitoyl cysteine). The interaction with SAG stretch occupies residues 330-348; sequence DDEVSASASKTETSQVAPA. Phosphoserine occurs at positions 334 and 338. A phosphothreonine mark is found at Thr-340 and Thr-342. A Phosphoserine modification is found at Ser-343.

It belongs to the G-protein coupled receptor 1 family. Opsin subfamily. As to quaternary structure, homodimer. May form a complex composed of RHO, GRK1 and RCVRN in a Ca(2+)-dependent manner; RCVRN prevents the interaction between GRK1 and RHO. Interacts with GRK1. Interacts (phosphorylated form) with SAG. Interacts with GNAT1. Interacts with GNAT3. SAG and G-proteins compete for a common binding site. Interacts with PRCD; the interaction promotes PRCD stability. Forms a complex with ASAP1 and ARF4. Forms a complex with ASAP1, RAB11A, Rabin8/RAB3IP, ARF4 and RAB11FIP3; the complex regulates Golgi-to-cilia rhodopsin/RHO transport in photoreceptors. Post-translationally, phosphorylated on some or all of the serine and threonine residues present in the C-terminal region. Contains one covalently linked retinal chromophore. Upon light absorption, the covalently bound 11-cis-retinal is converted to all-trans-retinal. After hydrolysis of the Schiff base and release of the covalently bound all-trans-retinal, active rhodopsin is regenerated by binding of a fresh molecule of 11-cis-retinal.

It is found in the membrane. The protein localises to the cell projection. It localises to the cilium. The protein resides in the photoreceptor outer segment. Photoreceptor required for image-forming vision at low light intensity. Required for photoreceptor cell viability after birth. Light-induced isomerization of 11-cis to all-trans retinal triggers a conformational change that activates signaling via G-proteins. Subsequent receptor phosphorylation mediates displacement of the bound G-protein alpha subunit by the arrestin SAG and terminates signaling. The chain is Rhodopsin (RHO) from Phoca vitulina (Harbor seal).